The chain runs to 266 residues: DNA damage-regulated autophagy modulator protein 2 (266 aa).

6 helical membrane-spanning segments follow: residues 8 to 28 (LSFL…FSYI), 53 to 73 (KCLF…TIYV), 92 to 112 (NKAG…VANF), 117 to 137 (FFAV…LYMF), 160 to 180 (LLLV…SSLL), and 207 to 227 (ITTA…LTYI).

This sequence belongs to the DRAM/TMEM150 family.

The protein localises to the lysosome membrane. The protein resides in the photoreceptor inner segment. It is found in the apical cell membrane. In terms of biological role, plays a role in the initiation of autophagy. In the retina, might be involved in the process of photoreceptor cells renewal and recycling to preserve visual function. Induces apoptotic cell death when coexpressed with DRAM1. This is DNA damage-regulated autophagy modulator protein 2 (DRAM2) from Bos taurus (Bovine).